A 297-amino-acid polypeptide reads, in one-letter code: Mitochondrial ornithine transporter 1 (297 aa).

Solcar repeat units lie at residues 15-97 (GSPA…LKLT), 102-205 (DPTL…FKKN), and 212-292 (KPHF…FRET). The next 6 membrane-spanning stretches (helical) occupy residues 18–38 (ASTFSAALVSSAISNVIGYPL), 72–91 (GLTLPLISATLSRSVSFTVY), 107–127 (YFISGLGTGTFISLFACPFEY), 184–204 (HLTRDALGSACYFTIYETFKK), 215–235 (FAYAFSGAFCGALSWILVFPV), and 264–285 (IYRGIGISLMRSALINSCNFTL).

The protein belongs to the mitochondrial carrier (TC 2.A.29) family.

Its subcellular location is the mitochondrion inner membrane. In terms of biological role, required for arginine biosynthesis. Transports ornithine synthesized from glutamate in the mitochondrial matrix to the cytosol, where it is converted to arginine. This Schizosaccharomyces pombe (strain 972 / ATCC 24843) (Fission yeast) protein is Mitochondrial ornithine transporter 1.